Reading from the N-terminus, the 227-residue chain is MENSDTDSEVFFWFQNQNQNHSHKFPSSCFPPSSHSAFYGSSSMINTETATMDEEDVCESYMMREITKKRKLTPIQLRLLEESFEEEKRLEPDRKLWLAEKLGLQPSQVAVWFQNRRARYKTKQLEHDCDSLKASYAKLKTDWDILFVQNQTLKSKVDLLKEKLKMQENLETQSIERKRLGEEGSSVKSDNTQYSEEEGLENQYSFPELAVLGFYYDPTLTASNLRL.

A DNA-binding region (homeobox) is located at residues 65–124 (EITKKRKLTPIQLRLLEESFEEEKRLEPDRKLWLAEKLGLQPSQVAVWFQNRRARYKTKQ). A leucine-zipper region spans residues 125 to 153 (LEHDCDSLKASYAKLKTDWDILFVQNQTL). Residues 175–198 (IERKRLGEEGSSVKSDNTQYSEEE) are disordered.

This sequence belongs to the HD-ZIP homeobox family. Class I subfamily. As to expression, predominantly expressed in flowers and siliques.

The protein resides in the nucleus. Its function is as follows. Probable transcription factor. This Arabidopsis thaliana (Mouse-ear cress) protein is Homeobox-leucine zipper protein ATHB-54 (ATHB-54).